A 151-amino-acid chain; its full sequence is Putative pre-16S rRNA nuclease (151 aa).

It belongs to the YqgF nuclease family.

The protein resides in the cytoplasm. Its function is as follows. Could be a nuclease involved in processing of the 5'-end of pre-16S rRNA. The sequence is that of Putative pre-16S rRNA nuclease from Thermosynechococcus vestitus (strain NIES-2133 / IAM M-273 / BP-1).